We begin with the raw amino-acid sequence, 115 residues long: Na(+)/H(+) antiporter subunit C1 (115 aa).

The next 3 helical transmembrane spans lie at 1 to 21 (MEII…YLVL), 28 to 48 (IIMG…TMGG), and 72 to 92 (LILT…VLAF).

It belongs to the CPA3 antiporters (TC 2.A.63) subunit C family. In terms of assembly, may form a heterooligomeric complex that consists of seven subunits: mnhA1, mnhB1, mnhC1, mnhD1, mnhE1, mnhF1 and mnhG1.

It localises to the cell membrane. Its function is as follows. Mnh complex is a Na(+)/H(+) antiporter involved in Na(+) excretion. In Staphylococcus epidermidis (strain ATCC 35984 / DSM 28319 / BCRC 17069 / CCUG 31568 / BM 3577 / RP62A), this protein is Na(+)/H(+) antiporter subunit C1 (mnhC1).